Here is a 404-residue protein sequence, read N- to C-terminus: Succinyl-diaminopimelate desuccinylase (404 aa).

His80 is a binding site for Zn(2+). Asp82 is a catalytic residue. Asp113 provides a ligand contact to Zn(2+). Residue Glu147 is the Proton acceptor of the active site. 3 residues coordinate Zn(2+): Glu148, Glu176, and His373.

It belongs to the peptidase M20A family. DapE subfamily. Homodimer. It depends on Zn(2+) as a cofactor. Co(2+) is required as a cofactor.

The catalysed reaction is N-succinyl-(2S,6S)-2,6-diaminopimelate + H2O = (2S,6S)-2,6-diaminopimelate + succinate. Its pathway is amino-acid biosynthesis; L-lysine biosynthesis via DAP pathway; LL-2,6-diaminopimelate from (S)-tetrahydrodipicolinate (succinylase route): step 3/3. Catalyzes the hydrolysis of N-succinyl-L,L-diaminopimelic acid (SDAP), forming succinate and LL-2,6-diaminopimelate (DAP), an intermediate involved in the bacterial biosynthesis of lysine and meso-diaminopimelic acid, an essential component of bacterial cell walls. This Allorhizobium ampelinum (strain ATCC BAA-846 / DSM 112012 / S4) (Agrobacterium vitis (strain S4)) protein is Succinyl-diaminopimelate desuccinylase.